A 467-amino-acid chain; its full sequence is tRNA-2-methylthio-N(6)-dimethylallyladenosine synthase (467 aa).

The tract at residues Met-1–Ala-20 is disordered. The MTTase N-terminal domain maps to Arg-23 to Gly-143. The [4Fe-4S] cluster site is built by Cys-32, Cys-68, Cys-106, Cys-184, Cys-188, and Cys-191. Positions Arg-170 to Ala-402 constitute a Radical SAM core domain. Positions Asp-405 to Ala-467 constitute a TRAM domain.

The protein belongs to the methylthiotransferase family. MiaB subfamily. Monomer. [4Fe-4S] cluster is required as a cofactor.

It localises to the cytoplasm. The enzyme catalyses N(6)-dimethylallyladenosine(37) in tRNA + (sulfur carrier)-SH + AH2 + 2 S-adenosyl-L-methionine = 2-methylsulfanyl-N(6)-dimethylallyladenosine(37) in tRNA + (sulfur carrier)-H + 5'-deoxyadenosine + L-methionine + A + S-adenosyl-L-homocysteine + 2 H(+). In terms of biological role, catalyzes the methylthiolation of N6-(dimethylallyl)adenosine (i(6)A), leading to the formation of 2-methylthio-N6-(dimethylallyl)adenosine (ms(2)i(6)A) at position 37 in tRNAs that read codons beginning with uridine. In Brucella suis (strain ATCC 23445 / NCTC 10510), this protein is tRNA-2-methylthio-N(6)-dimethylallyladenosine synthase.